Reading from the N-terminus, the 314-residue chain is MASYASEVKKELTQLEVHPEHARAELAALIRMNGSLSLMNHQFVLNVQTENPAIARRIYSLLKQNYQVESELLVRRKMKLKKNNQYIVRLKYDTNTVLNDLNIVAEDGFTIHTRVSEDIIDEDQRVRSYLRGAFLAGGSVNNPETSRYHLEIYSLYEEHNQDIVRMMNRFGLNAKTTVRRSGYITYLKEAEKIADFLQVIGATNAMLKFEDIRIVRDMRNSVNRLVNCETANLNKTIDAAAKQIENIEYLRDSVGLDNLPAKLREIALLRLEFPDITLKELGEKMPSGAISKSGINHRLRKLNQLAEGYQQKVI.

The H-T-H motif DNA-binding region spans 277-311 (TLKELGEKMPSGAISKSGINHRLRKLNQLAEGYQQ).

It belongs to the WhiA family.

Its function is as follows. Involved in cell division and chromosome segregation. In Latilactobacillus sakei subsp. sakei (strain 23K) (Lactobacillus sakei subsp. sakei), this protein is Probable cell division protein WhiA.